A 160-amino-acid polypeptide reads, in one-letter code: Eosinophil cationic protein (160 aa).

Positions 1-27 are cleaved as a signal peptide; it reads MVPKLFTSQICLLLLLGLMGVEGSLHA. The tract at residues 28–72 is required for nearly all of the bactericidal activities; partially involved in LPS-binding; that stretch reads RPPQFTRAQWFAIQHISLNPPRCTIAMRVINNYRWRCKNQNTFLR. His-42 serves as the catalytic Proton acceptor. Disulfide bonds link Cys-50-Cys-110, Cys-64-Cys-123, Cys-82-Cys-138, and Cys-89-Cys-98. 3'-nitrotyrosine is present on Tyr-60. 65–69 provides a ligand contact to substrate; it reads KNQNT. N-linked (GlcNAc...) asparagine glycans are attached at residues Asn-84, Asn-92, and Asn-119. The active-site Proton donor is the His-155.

Belongs to the pancreatic ribonuclease family. As to quaternary structure, interacts with bacterial lipopolysaccharide (LPS) and lipoteichoic acid (LTA). In vitro interacts with phospholipid bilayers.

It is found in the secreted. Its function is as follows. Cytotoxin and helminthotoxin with low-efficiency ribonuclease activity. Possesses a wide variety of biological activities. Exhibits antibacterial activity. This Gorilla gorilla gorilla (Western lowland gorilla) protein is Eosinophil cationic protein (RNASE3).